The primary structure comprises 352 residues: Isoflavone-7-O-methyltransferase 9 (352 aa).

Valine 118–tyrosine 127 is a binding site for substrate. The S-adenosyl-L-methionine site is built by glycine 196, aspartate 219, aspartate 239, methionine 240, and lysine 253. Residue histidine 257 is the Proton acceptor of the active site.

It belongs to the class I-like SAM-binding methyltransferase superfamily. Cation-independent O-methyltransferase family. COMT subfamily. Homodimer.

The enzyme catalyses a 7-hydroxyisoflavone + S-adenosyl-L-methionine = a 7-methoxyisoflavone + S-adenosyl-L-homocysteine + H(+). It participates in phytoalexin biosynthesis; medicarpin biosynthesis. Functionally, transfers a methyl group to 7-hydroxyls of the isoflavones daidzein, genistein and 6,7,4'-trihydroxyisoflavone. Can also methylate (+)6a-hydroxymaackiain with lower efficiency. In Medicago sativa (Alfalfa), this protein is Isoflavone-7-O-methyltransferase 9.